Consider the following 259-residue polypeptide: Insulin-like growth factor-binding protein 1 (259 aa).

Positions Met-1 to Gly-25 are cleaved as a signal peptide. Residues Ala-26–Glu-107 enclose the IGFBP N-terminal domain. 6 disulfide bridges follow: Cys-30–Cys-57, Cys-33–Cys-59, Cys-41–Cys-60, Cys-48–Cys-63, Cys-71–Cys-84, and Cys-78–Cys-104. The residue at position 45 (Ser-45) is a Phosphoserine; by FAM20C. A phosphoserine mark is found at Ser-120, Ser-123, Ser-126, and Ser-144. Ser-156 carries the post-translational modification Phosphoserine; by FAM20C. A Phosphothreonine; by FAM20C modification is found at Thr-157. Tyr-158 carries the phosphotyrosine modification. Residues Lys-173 to Cys-251 enclose the Thyroglobulin type-1 domain. 3 disulfide bridges follow: Cys-176–Cys-206, Cys-217–Cys-228, and Cys-230–Cys-251. Thr-193 carries the phosphothreonine; by FAM20C modification. Ser-194 and Ser-199 each carry phosphoserine; by FAM20C. Ser-242 is modified (phosphoserine; by FAM20C). The Cell attachment site motif lies at Arg-246–Asp-248.

Binds equally well IGF1 and IGF2. Interacts with integrin ITGA5:ITGB1. Interacts with VHL; this interaction inhibits HIF1A degradation. Phosphorylated; probably by casein kinase II. Phosphorylation alters the affinity of the protein for IGFs. In amniotic fluid, the unmodified protein is the most abundant form, while mono-, bi-, tri- and tetraphosphorylated forms are present in decreasing amounts. The phosphorylation state may influence the propensity to proteolysis.

The protein localises to the secreted. In terms of biological role, multifunctional protein that plays a critical role in regulating the availability of IGFs such as IGF1 and IGF2 to their receptors and thereby regulates IGF-mediated cellular processes including cell migration, proliferation, differentiation or apoptosis in a cell-type specific manner. Also plays a positive role in cell migration by interacting with integrin ITGA5:ITGB1 through its RGD motif. Mechanistically, binding to integrins leads to activation of focal adhesion kinase/PTK2 and stimulation of the mitogen-activated protein kinase (MAPK) pathway. Regulates cardiomyocyte apoptosis by suppressing HIF-1alpha/HIF1A ubiquitination and subsequent degradation. This is Insulin-like growth factor-binding protein 1 (IGFBP1) from Homo sapiens (Human).